The chain runs to 254 residues: Photosystem II 22 kDa protein 2, chloroplastic (254 aa).

The N-terminal 38 residues, 1 to 38 (MALQQSMAMPMMVVSDLGTAPRSSPMVQLQRMKKHLVV), are a transit peptide targeting the chloroplast. Repeat copies occupy residues 42-148 (FKSR…FVDD) and 149-253 (ATGL…DNDD). A run of 4 helical transmembrane segments spans residues 86–106 (VAML…KGIL), 120–140 (AEPL…GALG), 184–204 (LFVG…EIIT), and 219–239 (PINE…FAAI).

This sequence belongs to the ELIP/psbS family.

The protein resides in the plastid. Its subcellular location is the chloroplast thylakoid membrane. Functionally, involved in high light-mediated energy-dependent nonphotochemical quenching (NPQ, qE) and thermal dissipation (TD) thus regulating energy conversion in photosystem II and protecting from photoinhibition. Also seems to regulate quantum yield of electron transport in fluctuating light conditions. The sequence is that of Photosystem II 22 kDa protein 2, chloroplastic from Oryza sativa subsp. japonica (Rice).